The following is a 284-amino-acid chain: ATP phosphoribosyltransferase (284 aa).

It belongs to the ATP phosphoribosyltransferase family. Long subfamily. The cofactor is Mg(2+).

It localises to the cytoplasm. The enzyme catalyses 1-(5-phospho-beta-D-ribosyl)-ATP + diphosphate = 5-phospho-alpha-D-ribose 1-diphosphate + ATP. The protein operates within amino-acid biosynthesis; L-histidine biosynthesis; L-histidine from 5-phospho-alpha-D-ribose 1-diphosphate: step 1/9. Feedback inhibited by histidine. Functionally, catalyzes the condensation of ATP and 5-phosphoribose 1-diphosphate to form N'-(5'-phosphoribosyl)-ATP (PR-ATP). Has a crucial role in the pathway because the rate of histidine biosynthesis seems to be controlled primarily by regulation of HisG enzymatic activity. The sequence is that of ATP phosphoribosyltransferase from Corynebacterium kroppenstedtii (strain DSM 44385 / JCM 11950 / CIP 105744 / CCUG 35717).